The sequence spans 345 residues: Dihydroorotase (345 aa).

Zn(2+) is bound by residues His-13 and His-15. Residues 15–17 (HLR) and Asn-41 each bind substrate. The Zn(2+) site is built by Lys-99, His-136, and His-174. At Lys-99 the chain carries N6-carboxylysine. Substrate is bound at residue His-136. Position 219 (Leu-219) interacts with substrate. Asp-247 contributes to the Zn(2+) binding site. Asp-247 is a catalytic residue. The substrate site is built by His-251 and Ala-263.

Belongs to the metallo-dependent hydrolases superfamily. DHOase family. Class II DHOase subfamily. As to quaternary structure, homodimer. The cofactor is Zn(2+).

It carries out the reaction (S)-dihydroorotate + H2O = N-carbamoyl-L-aspartate + H(+). It participates in pyrimidine metabolism; UMP biosynthesis via de novo pathway; (S)-dihydroorotate from bicarbonate: step 3/3. Functionally, catalyzes the reversible cyclization of carbamoyl aspartate to dihydroorotate. The protein is Dihydroorotase of Acaryochloris marina (strain MBIC 11017).